We begin with the raw amino-acid sequence, 142 residues long: Peptide methionine sulfoxide reductase MsrB (142 aa).

The region spanning 2 to 125 is the MsrB domain; that stretch reads IKKDKNELNE…NSAAIQFIPY (124 aa). Cys114 (nucleophile) is an active-site residue.

This sequence belongs to the MsrB Met sulfoxide reductase family.

It carries out the reaction L-methionyl-[protein] + [thioredoxin]-disulfide + H2O = L-methionyl-(R)-S-oxide-[protein] + [thioredoxin]-dithiol. The polypeptide is Peptide methionine sulfoxide reductase MsrB (Staphylococcus haemolyticus (strain JCSC1435)).